The sequence spans 657 residues: Interferon-induced GTP-binding protein Mx1 (657 aa).

Met-1 carries the post-translational modification N-acetylmethionine. One can recognise a Dynamin-type G domain in the interval Asp-63–Pro-336. Residues Gly-73–Ser-80 are G1 motif. Residue Gly-73 to Ser-80 coordinates GTP. Positions Val-98–Arg-100 are G2 motif. Residues Asp-174–Gly-177 form a G3 motif region. GTP is bound by residues Asp-174–Ile-178 and Thr-243–Asp-246. A G4 motif region spans residues Thr-243–Asp-246. The interval Lys-275–Gly-278 is G5 motif. The interval Leu-337–Glu-362 is bundle signaling element (BSE). The tract at residues Glu-362–Cys-529 is middle domain. A stalk region spans residues Asp-363–Glu-627. Residues Arg-540 to Lys-551 show a composition bias toward basic and acidic residues. The segment at Arg-540 to His-559 is disordered. Residues Lys-550–Lys-553 are critical for lipid-binding. Residues Leu-569–Gly-657 enclose the GED domain.

The protein belongs to the TRAFAC class dynamin-like GTPase superfamily. Dynamin/Fzo/YdjA family. Homooligomer. Oligomerizes into multimeric filamentous or ring-like structures by virtue of its stalk domain. Oligomerization is critical for GTPase activity, protein stability, and recognition of viral target structures. Interacts with TRPC1, TRPC3, TRPC4, TRPC5, TRPC6 and TRPC7. Interacts with HSPA5. Interacts with TUBB/TUBB5. Interacts with DDX39A and DDX39B. Post-translationally, ISGylated.

The protein resides in the cytoplasm. It is found in the endoplasmic reticulum membrane. The protein localises to the perinuclear region. Functionally, interferon-induced dynamin-like GTPase with antiviral activity. This chain is Interferon-induced GTP-binding protein Mx1 (MX1), found in Canis lupus familiaris (Dog).